The chain runs to 318 residues: Peroxisomal targeting signal 2 receptor (318 aa).

WD repeat units follow at residues 60-91, 104-136, 148-179, 191-222, 235-266, and 279-310; these read DWNDGLFDVTWSENNEHVLVTCSGDGSLQLWD, EHTQEVYSVDWSQTRGEQLVVSGSWDQTVKVWD, GHESVIYSTIWSPHIPGCFASASGDQTLRIWD, AHQTEILSCDWCKYNENLVVTGAVDCSLRGWD, GHTYAIRRVKFSPFHASVLASCSYDFTVRFWN, and HHTEFTCGLDLSLQSPTQVADCSWDETIKIYD.

It belongs to the WD repeat peroxin-7 family. In terms of assembly, interacts with PEX5; interaction only takes place when PEX7 is associated with cargo proteins. Interacts with VWA8.

The protein resides in the cytoplasm. Its subcellular location is the cytosol. It is found in the peroxisome matrix. Its function is as follows. Receptor required for the peroxisomal import of proteins containing a C-terminal PTS2-type peroxisomal targeting signal. Specifically binds to cargo proteins containing a PTS2 peroxisomal targeting signal in the cytosol. Cargo protein-binding triggers interaction with PEX5 and formation of a ternary complex composed of PEX5 and PEX7 along with PTS2-containing cargo proteins, which is tranlocated into peroxisomes by passing through the PEX13-PEX14 docking complex. This chain is Peroxisomal targeting signal 2 receptor, found in Mus musculus (Mouse).